Consider the following 332-residue polypeptide: Malate dehydrogenase, cytoplasmic (332 aa).

NAD(+) is bound by residues 16-17, Asp43, and Gly90; that span reads QI. Arg99 contacts oxaloacetate. NAD(+)-binding residues include Gln113 and Asn132. Oxaloacetate is bound by residues Asn132, Arg163, His188, and Ser243. His188 functions as the Proton acceptor in the catalytic mechanism.

This sequence belongs to the LDH/MDH superfamily. MDH type 2 family. Monomer. Expressed constitutively in roots.

The protein resides in the cell membrane. The catalysed reaction is (S)-malate + NAD(+) = oxaloacetate + NADH + H(+). Malate dehydrogenase; catalyzes a reversible NAD-dependent dehydrogenase reaction involved in central metabolism and redox homeostasis. In Zea mays (Maize), this protein is Malate dehydrogenase, cytoplasmic.